Consider the following 353-residue polypeptide: Photosystem II D2 protein (353 aa).

T2 carries the post-translational modification N-acetylthreonine. Residue T2 is modified to Phosphothreonine. A helical membrane pass occupies residues C41–T61. Residue H118 participates in chlorophyll a binding. Residues G125 to P141 form a helical membrane-spanning segment. The pheophytin a site is built by Q130 and N143. A helical transmembrane segment spans residues V153–S166. Chlorophyll a is bound at residue H198. A helical transmembrane segment spans residues A208 to D228. Positions 215 and 262 each coordinate a plastoquinone. Residue H215 participates in Fe cation binding. Residue H269 participates in Fe cation binding. The helical transmembrane segment at G279–R295 threads the bilayer.

This sequence belongs to the reaction center PufL/M/PsbA/D family. As to quaternary structure, PSII is composed of 1 copy each of membrane proteins PsbA, PsbB, PsbC, PsbD, PsbE, PsbF, PsbH, PsbI, PsbJ, PsbK, PsbL, PsbM, PsbT, PsbX, PsbY, PsbZ, Psb30/Ycf12, at least 3 peripheral proteins of the oxygen-evolving complex and a large number of cofactors. It forms dimeric complexes. It depends on The D1/D2 heterodimer binds P680, chlorophylls that are the primary electron donor of PSII, and subsequent electron acceptors. It shares a non-heme iron and each subunit binds pheophytin, quinone, additional chlorophylls, carotenoids and lipids. There is also a Cl(-1) ion associated with D1 and D2, which is required for oxygen evolution. The PSII complex binds additional chlorophylls, carotenoids and specific lipids. as a cofactor.

The protein resides in the plastid. It is found in the chloroplast thylakoid membrane. It carries out the reaction 2 a plastoquinone + 4 hnu + 2 H2O = 2 a plastoquinol + O2. In terms of biological role, photosystem II (PSII) is a light-driven water:plastoquinone oxidoreductase that uses light energy to abstract electrons from H(2)O, generating O(2) and a proton gradient subsequently used for ATP formation. It consists of a core antenna complex that captures photons, and an electron transfer chain that converts photonic excitation into a charge separation. The D1/D2 (PsbA/PsbD) reaction center heterodimer binds P680, the primary electron donor of PSII as well as several subsequent electron acceptors. D2 is needed for assembly of a stable PSII complex. This chain is Photosystem II D2 protein, found in Platanus occidentalis (Sycamore).